The chain runs to 386 residues: Patatin-17 (386 aa).

An N-terminal signal peptide occupies residues 1 to 23; sequence MATTKSFLILIFMILATTSSTFA. The 198-residue stretch at 32 to 229 folds into the PNPLA domain; the sequence is LSIDGGGIRG…TVADPALLSI (198 aa). The GXGXXG signature appears at 36-41; sequence GGGIRG. Positions 75–79 match the GXSXG motif; the sequence is GTSTG. The active-site Nucleophile is the S77. N-linked (GlcNAc...) asparagine glycosylation is present at N202. D215 functions as the Proton acceptor in the catalytic mechanism. The DGA/G signature appears at 215–217; that stretch reads DGA. Residues 321-384 adopt a coiled-coil conformation; the sequence is ENALTGTTTE…DRKKLRANKA (64 aa).

It belongs to the patatin family.

The protein resides in the vacuole. Functionally, non-specific lipolytic acyl hydrolase (LAH), an activity which is thought to be involved in the response of tubers to pathogens. Catalyzes the non-specific hydrolysis of phospholipids, glycolipids, sulfolipids, and mono- and diacylglycerols includng p-nitrophenyl caprate. Confers resistance to southern corn rootworm (SCRW). This chain is Patatin-17, found in Solanum cardiophyllum (Heartleaf nightshade).